The sequence spans 114 residues: uncharacterized protein (114 aa).

Residues 13 to 30 (LYISAAGIASIYVVKTIV) traverse the membrane as a helical segment.

It localises to the mitochondrion outer membrane. This is an uncharacterized protein from Saccharomyces cerevisiae (strain ATCC 204508 / S288c) (Baker's yeast).